Consider the following 432-residue polypeptide: Glutamate-1-semialdehyde 2,1-aminomutase 2 (432 aa).

At K268 the chain carries N6-(pyridoxal phosphate)lysine.

This sequence belongs to the class-III pyridoxal-phosphate-dependent aminotransferase family. HemL subfamily. Homodimer. Requires pyridoxal 5'-phosphate as cofactor.

It is found in the cytoplasm. The enzyme catalyses (S)-4-amino-5-oxopentanoate = 5-aminolevulinate. It functions in the pathway porphyrin-containing compound metabolism; protoporphyrin-IX biosynthesis; 5-aminolevulinate from L-glutamyl-tRNA(Glu): step 2/2. This Listeria innocua serovar 6a (strain ATCC BAA-680 / CLIP 11262) protein is Glutamate-1-semialdehyde 2,1-aminomutase 2.